Reading from the N-terminus, the 134-residue chain is Small ribosomal subunit protein uS8c (134 aa).

It belongs to the universal ribosomal protein uS8 family. Part of the 30S ribosomal subunit.

It is found in the plastid. It localises to the chloroplast. In terms of biological role, one of the primary rRNA binding proteins, it binds directly to 16S rRNA central domain where it helps coordinate assembly of the platform of the 30S subunit. The polypeptide is Small ribosomal subunit protein uS8c (rps8) (Aethionema cordifolium (Lebanon stonecress)).